A 395-amino-acid chain; its full sequence is Putative 8-amino-7-oxononanoate synthase (395 aa).

Arg-23 is a binding site for substrate. Residue 110 to 111 (GY) participates in pyridoxal 5'-phosphate binding. Residue His-135 participates in substrate binding. Pyridoxal 5'-phosphate is bound by residues Ser-182, 207-210 (DEAH), and 239-242 (TFSK). Lys-242 carries the post-translational modification N6-(pyridoxal phosphate)lysine. A substrate-binding site is contributed by Thr-356.

It belongs to the class-II pyridoxal-phosphate-dependent aminotransferase family. BioF subfamily. As to quaternary structure, homodimer. It depends on pyridoxal 5'-phosphate as a cofactor.

The catalysed reaction is 6-carboxyhexanoyl-[ACP] + L-alanine + H(+) = (8S)-8-amino-7-oxononanoate + holo-[ACP] + CO2. Its pathway is cofactor biosynthesis; biotin biosynthesis. Catalyzes the decarboxylative condensation of pimeloyl-[acyl-carrier protein] and L-alanine to produce 8-amino-7-oxononanoate (AON), [acyl-carrier protein], and carbon dioxide. This is Putative 8-amino-7-oxononanoate synthase (bioF) from Bacillus cereus (strain B4264).